A 491-amino-acid chain; its full sequence is MKIMMVTSELVPFAKVGGLADAVTALSIALAEKRHDVRVVMPRYYKIDRKNLKQIPGAMAVHLGPYEHWVGVYESNLPSSKVKVYFIDHEQAFGRDGVYGSAFEPDFSDNTKRFSLLAHAAFQVCRKQAWIPDVVHAHDWAAGLVPVLLRFTEKNTEFKNTASVFTIHNMGYQGVYSKHTFPDTGLDWNDFYTTGFEDWDRINFLKAALVSSDMLTTVSPSYAEEIKRPEFGFRMDGILRYREKELTGILNGVDTSIWNPSKDEYIPYRYNSKTLEEKEKNKSVLQERFGLEIDISVPVFGMISRLVDQKGISELFGPMYGSAFKICSDIKLQMVVLGSGESWCEKELNFLSQRLPNFRCYIGYNEELSHLIEAGSDFFLMPSRYEPCGLNQMYSLLYGTLPIVRKTGGLADTVENYNEETGEGTGFVLDYLSPQSIYDTVGWAAYAWYNKKDHIKKMRTKAMSKKFGWNIAAEKYLKVYADAIEKKASML.

Residue K15 participates in ADP-alpha-D-glucose binding.

This sequence belongs to the glycosyltransferase 1 family. Bacterial/plant glycogen synthase subfamily.

It carries out the reaction [(1-&gt;4)-alpha-D-glucosyl](n) + ADP-alpha-D-glucose = [(1-&gt;4)-alpha-D-glucosyl](n+1) + ADP + H(+). It functions in the pathway glycan biosynthesis; glycogen biosynthesis. Functionally, synthesizes alpha-1,4-glucan chains using ADP-glucose. This chain is Glycogen synthase, found in Treponema denticola (strain ATCC 35405 / DSM 14222 / CIP 103919 / JCM 8153 / KCTC 15104).